Here is a 340-residue protein sequence, read N- to C-terminus: N-acetyl-gamma-glutamyl-phosphate reductase (340 aa).

The active site involves Cys-146.

This sequence belongs to the NAGSA dehydrogenase family. Type 1 subfamily.

It localises to the cytoplasm. The enzyme catalyses N-acetyl-L-glutamate 5-semialdehyde + phosphate + NADP(+) = N-acetyl-L-glutamyl 5-phosphate + NADPH + H(+). It participates in amino-acid biosynthesis; L-arginine biosynthesis; N(2)-acetyl-L-ornithine from L-glutamate: step 3/4. Its function is as follows. Catalyzes the NADPH-dependent reduction of N-acetyl-5-glutamyl phosphate to yield N-acetyl-L-glutamate 5-semialdehyde. The polypeptide is N-acetyl-gamma-glutamyl-phosphate reductase (Streptococcus gordonii (strain Challis / ATCC 35105 / BCRC 15272 / CH1 / DL1 / V288)).